We begin with the raw amino-acid sequence, 336 residues long: Peroxidase 20 (336 aa).

The signal sequence occupies residues 1–24 (MEIKQKKVWLSLIVLYAITTSVLG). Intrachain disulfides connect Cys39–Cys119, Cys72–Cys77, Cys125–Cys331, and Cys204–Cys239. Catalysis depends on His70, which acts as the Proton acceptor. Ca(2+) is bound by residues Asp71, Val74, Gly76, Asp78, and Ser80. Pro167 contacts substrate. Residue Asn170 is glycosylated (N-linked (GlcNAc...) asparagine). His197 serves as a coordination point for heme b. Thr198 contributes to the Ca(2+) binding site. Ca(2+)-binding residues include Asp252, Thr255, and Asp260.

Belongs to the peroxidase family. Classical plant (class III) peroxidase subfamily. Heme b serves as cofactor. It depends on Ca(2+) as a cofactor.

It is found in the secreted. It catalyses the reaction 2 a phenolic donor + H2O2 = 2 a phenolic radical donor + 2 H2O. Its function is as follows. Removal of H(2)O(2), oxidation of toxic reductants, biosynthesis and degradation of lignin, suberization, auxin catabolism, response to environmental stresses such as wounding, pathogen attack and oxidative stress. These functions might be dependent on each isozyme/isoform in each plant tissue. May be implicated in the systemic acquired resistance response via the salicylic acid signal transduction pathway. This chain is Peroxidase 20 (PER20), found in Arabidopsis thaliana (Mouse-ear cress).